A 633-amino-acid polypeptide reads, in one-letter code: MSCQISCKSRIGGGGGFRSFSSGSAVVSGGSRRSTRSFSCLSRHGGGGGGAGGGGFGSRSLVGLGGTKSISISVAGGGGSFGSGGGFGGRGGGFGGGSGFGGGSGFGGGGFGGGGFGGGSGFGGGGFGGGGFGGGRFGGGGGLGGFGGPGGFGPGGFPGGGIHEVSINESLLQPLNVKVDPEIQNVKSQEREQIKTLNNKFASFIDKVRFLEQQNQVLQTKWELLQQLDVSTRTTNLEPIFQAYIAKLKKYVDTLSAERTSQGSELNNMQDLVEDFKKKYEDEINKRTAAENDFVTLKKDVDNNYMTKVELQAKTDVLTQELEFIKFLFDXELSQMQTQISETNVTLSMDNNRSLDLDSIISEVKAQYEEIAQKSKAEAEALYHSKYEELQVTAGKHGDSLKEVKMEISELNRMIQRLQGEIAHVKKQCKSVQEAIAEAEQKGEHAVKDAQGKLSDLEEALQQAREDLAGLLRDYQELMNVKLALDVEIATYRKLLEGEECRMSGDLSSNVTVSVTSSSMSSSMTSRGGFGGYGSGGRGSSSGGGGFSSGSGSYSSGGRGSSSRGGGGGGYGSGGGSGGKYSSGGGSRGGSGSGGGYGSSSGGGYGSGGGSRGGFSSQKGGSGSGSSVTFSFR.

The head stretch occupies residues 1–189; that stretch reads MSCQISCKSR…DPEIQNVKSQ (189 aa). An Asymmetric dimethylarginine modification is found at Arg18. Phosphoserine is present on residues Ser21, Ser24, and Ser60. The tract at residues 190-225 is coil 1A; it reads EREQIKTLNNKFASFIDKVRFLEQQNQVLQTKWELL. Residues 190–503 enclose the IF rod domain; that stretch reads EREQIKTLNN…KLLEGEECRM (314 aa). The segment at 226 to 244 is linker 1; that stretch reads QQLDVSTRTTNLEPIFQAY. A coil 1B region spans residues 245-336; it reads IAKLKKYVDT…FLFDXELSQM (92 aa). The interval 337–360 is linker 12; that stretch reads QTQISETNVTLSMDNNRSLDLDSI. A coil 2 region spans residues 361–499; the sequence is ISEVKAQYEE…ATYRKLLEGE (139 aa). The interval 500 to 633 is tail; sequence ECRMSGDLSS…SGSSVTFSFR (134 aa). The span at 518–527 shows a compositional bias: low complexity; that stretch reads SSMSSSMTSR. Residues 518–633 form a disordered region; it reads SSMSSSMTSR…SGSSVTFSFR (116 aa). Residues 528–613 show a composition bias toward gly residues; the sequence is GGFGGYGSGG…GYGSGGGSRG (86 aa). Arg588 and Arg612 each carry omega-N-methylarginine.

Belongs to the intermediate filament family. In terms of assembly, heterotetramer of two type I and two type II keratins. Associates with KRT10.

The protein localises to the cytoplasm. Probably contributes to terminal cornification. Associated with keratinocyte activation, proliferation and keratinization. Required for maintenance of corneocytes and keratin filaments in suprabasal keratinocytes in the epidermis of the ear, potentially via moderation of expression and localization of keratins and their partner proteins. Plays a role in the establishment of the epidermal barrier on plantar skin. The sequence is that of Keratin, type II cytoskeletal 2 epidermal (KRT2) from Canis lupus familiaris (Dog).